The primary structure comprises 200 residues: NADH-quinone oxidoreductase subunit C (200 aa).

It belongs to the complex I 30 kDa subunit family. As to quaternary structure, NDH-1 is composed of 14 different subunits. Subunits NuoB, C, D, E, F, and G constitute the peripheral sector of the complex.

The protein localises to the cell inner membrane. The enzyme catalyses a quinone + NADH + 5 H(+)(in) = a quinol + NAD(+) + 4 H(+)(out). Functionally, NDH-1 shuttles electrons from NADH, via FMN and iron-sulfur (Fe-S) centers, to quinones in the respiratory chain. The immediate electron acceptor for the enzyme in this species is believed to be ubiquinone. Couples the redox reaction to proton translocation (for every two electrons transferred, four hydrogen ions are translocated across the cytoplasmic membrane), and thus conserves the redox energy in a proton gradient. This Burkholderia ambifaria (strain MC40-6) protein is NADH-quinone oxidoreductase subunit C.